A 174-amino-acid polypeptide reads, in one-letter code: Crossover junction endodeoxyribonuclease RuvC (174 aa).

Residues D8, E67, and D139 contribute to the active site. Mg(2+)-binding residues include D8, E67, and D139.

This sequence belongs to the RuvC family. As to quaternary structure, homodimer which binds Holliday junction (HJ) DNA. The HJ becomes 2-fold symmetrical on binding to RuvC with unstacked arms; it has a different conformation from HJ DNA in complex with RuvA. In the full resolvosome a probable DNA-RuvA(4)-RuvB(12)-RuvC(2) complex forms which resolves the HJ. Mg(2+) is required as a cofactor.

Its subcellular location is the cytoplasm. It catalyses the reaction Endonucleolytic cleavage at a junction such as a reciprocal single-stranded crossover between two homologous DNA duplexes (Holliday junction).. In terms of biological role, the RuvA-RuvB-RuvC complex processes Holliday junction (HJ) DNA during genetic recombination and DNA repair. Endonuclease that resolves HJ intermediates. Cleaves cruciform DNA by making single-stranded nicks across the HJ at symmetrical positions within the homologous arms, yielding a 5'-phosphate and a 3'-hydroxyl group; requires a central core of homology in the junction. The consensus cleavage sequence is 5'-(A/T)TT(C/G)-3'. Cleavage occurs on the 3'-side of the TT dinucleotide at the point of strand exchange. HJ branch migration catalyzed by RuvA-RuvB allows RuvC to scan DNA until it finds its consensus sequence, where it cleaves and resolves the cruciform DNA. This chain is Crossover junction endodeoxyribonuclease RuvC, found in Stutzerimonas stutzeri (strain A1501) (Pseudomonas stutzeri).